The sequence spans 647 residues: Chaperone protein HtpG (647 aa).

Residues 1–353 (MNAHVEQLEF…AQDMSLNVSR (353 aa)) are a; substrate-binding. The b stretch occupies residues 354 to 567 (EILQQDRQIK…AFGMTPALAR (214 aa)). Residues 568–647 (IYRASGQEVP…LLAERLARTL (80 aa)) are c.

It belongs to the heat shock protein 90 family. Homodimer.

Its subcellular location is the cytoplasm. Functionally, molecular chaperone. Has ATPase activity. This chain is Chaperone protein HtpG, found in Mycobacterium bovis (strain ATCC BAA-935 / AF2122/97).